The primary structure comprises 124 residues: Large ribosomal subunit protein bL12 (124 aa).

The protein belongs to the bacterial ribosomal protein bL12 family. Homodimer. Part of the ribosomal stalk of the 50S ribosomal subunit. Forms a multimeric L10(L12)X complex, where L10 forms an elongated spine to which 2 to 4 L12 dimers bind in a sequential fashion. Binds GTP-bound translation factors.

Its function is as follows. Forms part of the ribosomal stalk which helps the ribosome interact with GTP-bound translation factors. Is thus essential for accurate translation. In Ralstonia pickettii (strain 12J), this protein is Large ribosomal subunit protein bL12.